The primary structure comprises 435 residues: Large ribosomal subunit protein mL65 (435 aa).

The protein belongs to the mitochondrion-specific ribosomal protein mL65 family. Component of the mitochondrial ribosome small subunit (28S) which comprises a 12S rRNA and about 30 distinct proteins.

It localises to the mitochondrion. The polypeptide is Large ribosomal subunit protein mL65 (MRPS30) (Bos taurus (Bovine)).